A 148-amino-acid chain; its full sequence is Fluoride-specific ion channel FluC 2 (148 aa).

A run of 4 helical transmembrane segments spans residues 23 to 43 (LGHL…RLAV), 61 to 81 (GTLA…TLIF), 92 to 112 (FWVL…LHTL), and 120 to 140 (LLGG…ALAG). Na(+) contacts are provided by glycine 99 and threonine 102.

Belongs to the fluoride channel Fluc/FEX (TC 1.A.43) family.

Its subcellular location is the cell membrane. It catalyses the reaction fluoride(in) = fluoride(out). With respect to regulation, na(+) is not transported, but it plays an essential structural role and its presence is essential for fluoride channel function. Its function is as follows. Fluoride-specific ion channel. Important for reducing fluoride concentration in the cell, thus reducing its toxicity. The protein is Fluoride-specific ion channel FluC 2 of Rubrobacter xylanophilus (strain DSM 9941 / JCM 11954 / NBRC 16129 / PRD-1).